The sequence spans 1305 residues: Contactin-associated protein-like 5 (1305 aa).

The signal sequence occupies residues 1–22 (MDSPALGAVALLLAGFWHLGLT). Residues 23 to 174 (ATNYNCDGAL…IGLRVEVFGC (152 aa)) form the F5/8 type C domain. The Extracellular segment spans residues 23-1236 (ATNYNCDGAL…PLTNAVRSDS (1214 aa)). Laminin G-like domains follow at residues 180–360 (IADF…TFSC) and 367–544 (PITF…IDLC). 5 disulfides stabilise this stretch: Cys329–Cys360, Cys512–Cys544, Cys550–Cys561, Cys555–Cys570, and Cys572–Cys582. Residues 546–583 (IKDRCLPNYCEHGGKCSQSWTTFYCDCNDTSYMGATCH) form the EGF-like 1 domain. The Fibrinogen C-terminal domain occupies 584–790 (NSIYEQSCEA…LHCYGDRQFW (207 aa)). One can recognise a Laminin G-like 3 domain in the interval 791–956 (NAASFNTEAS…KMTPGVKPGC (166 aa)). 5 disulfides stabilise this stretch: Cys929-Cys956, Cys960-Cys973, Cys967-Cys982, Cys984-Cys994, and Cys1163-Cys1198. An EGF-like 2 domain is found at 957-995 (PGHCSSYGNLCHNGGKCVEKYNGYSCDCTSSAYEGPFCK). Residues 1017 to 1198 (PVTKNASTSS…VKGSLTESSC (182 aa)) form the Laminin G-like 4 domain. The chain crosses the membrane as a helical span at residues 1237-1257 (AVIGGVIAVVIFIIFCIIAIM). At 1258–1305 (SRFLYQHKQAHRSSQTKEKEYPENLESSFKADIDLQNTVSECKREYFI) the chain is on the cytoplasmic side.

This sequence belongs to the neurexin family. As to expression, expressed in brain.

Its subcellular location is the membrane. Its function is as follows. May play a role in the correct development and proper functioning of the peripheral and central nervous system and be involved in cell adhesion and intercellular communication. This Gallus gallus (Chicken) protein is Contactin-associated protein-like 5 (CNTNAP5).